We begin with the raw amino-acid sequence, 1289 residues long: SH3 domain and tetratricopeptide repeat-containing protein 2 (1289 aa).

SH3 domains follow at residues 176–239 (EGHF…PLPV) and 267–330 (IGRG…LDSC). Residues 393–442 (SQPEGFREARSGGTWMERQTIGSRRSSGSGDSSPEEDELISASSDSYHLP) form a disordered region. Residues 414–424 (GSRRSSGSGDS) are compositionally biased toward low complexity. 8 TPR repeats span residues 529–562 (ARLC…LDGA), 758–791 (RTLC…GKLL), 837–870 (GVVH…AREM), 1002–1038 (GQLL…FVDL), 1085–1119 (LKLY…LARR), 1120–1153 (MKAL…ATLA), 1167–1200 (LVAF…CPPW), and 1211–1245 (AKVY…AVLM).

In Mus musculus (Mouse), this protein is SH3 domain and tetratricopeptide repeat-containing protein 2 (Sh3tc2).